A 78-amino-acid chain; its full sequence is Translation initiation factor IF-1, plastid (78 aa).

Residues Met1 to Arg72 enclose the S1-like domain.

Belongs to the IF-1 family. As to quaternary structure, component of the 30S ribosomal translation pre-initiation complex which assembles on the 30S ribosome in the order IF-2 and IF-3, IF-1 and N-formylmethionyl-tRNA(fMet); mRNA recruitment can occur at any time during PIC assembly.

It localises to the plastid. Its function is as follows. One of the essential components for the initiation of protein synthesis. Stabilizes the binding of IF-2 and IF-3 on the 30S subunit to which N-formylmethionyl-tRNA(fMet) subsequently binds. Helps modulate mRNA selection, yielding the 30S pre-initiation complex (PIC). Upon addition of the 50S ribosomal subunit IF-1, IF-2 and IF-3 are released leaving the mature 70S translation initiation complex. This Aneura mirabilis (Parasitic liverwort) protein is Translation initiation factor IF-1, plastid.